A 95-amino-acid polypeptide reads, in one-letter code: Ribosome-binding factor A (95 aa).

This sequence belongs to the RbfA family. As to quaternary structure, interacts with the 30S ribosomal subunit as a monomer, binding in a position overlapping the sites of the A and P site tRNAs, and displacing segments of the 16S rRNA. Probably contacts 16S rRNA and ribosomal protein S9 and S13.

It is found in the cytoplasm. Functionally, one of several proteins that assist in the late maturation steps of the functional core of the 30S ribosomal subunit. Associates with free 30S ribosomal subunits (but not with 30S subunits that are part of 70S ribosomes or polysomes). Required for efficient processing of 16S rRNA. Probably interacts with the 5'-terminal helix region of 16S rRNA, bringing together different domains of the 30S ribosomal subunit which aids assembly. The sequence is that of Ribosome-binding factor A from Thermus thermophilus (strain ATCC 27634 / DSM 579 / HB8).